Here is a 396-residue protein sequence, read N- to C-terminus: OTU domain-containing protein 3 (396 aa).

Residues 1 to 49 (MSRKQAAKSRPGSGGRRAEAERKRDERAARRALAKERRNRPDPGGSGCE) form a disordered region. Positions 16–41 (RRAEAERKRDERAARRALAKERRNRP) are enriched in basic and acidic residues. The OTU domain maps to 64–188 (LKLREVPGDG…GEHYDSVRRI (125 aa)). Lys-65 is subject to N6-acetyllysine. The segment at 69–75 (VPGDGNC) is cys-loop. Residue Asp-72 is part of the active site. Cys-75 functions as the Nucleophile in the catalytic mechanism. An N6-acetyllysine mark is found at Lys-121 and Lys-128. Residues 126–136 (LSKPGTFAGND) form a variable-loop region. A his-loop region spans residues 176 to 181 (YRYGEH). Residue His-181 is part of the active site. Lys-219 carries the N6-acetyllysine modification. Residues 229–269 (DDVEDAVHKVGSATGCTDFNLIVQNLEAENYNIKSAITALL) enclose the UBA-like domain. Residues 275 to 381 (TGNDAEENHE…RDTGRSEADM (107 aa)) are disordered. Composition is skewed to basic and acidic residues over residues 280–301 (EENH…EAGS), 312–331 (NEGR…ESKA), and 343–379 (QRRE…RSEA). Residue Lys-290 is modified to N6-acetyllysine.

Glucose and fatty acids stimulate CREBBP-dependent acetylation, promoting its nuclear translocation.

It localises to the cytoplasm. The protein resides in the nucleus. It catalyses the reaction Thiol-dependent hydrolysis of ester, thioester, amide, peptide and isopeptide bonds formed by the C-terminal Gly of ubiquitin (a 76-residue protein attached to proteins as an intracellular targeting signal).. Deubiquitinating enzyme that hydrolyzes 'Lys-6'- and 'Lys-11'-linked polyubiquitin. Also hydrolyzes heterotypic (mixed and branched) and homotypic chains. Important regulator of energy metabolism. Glucose and fatty acids trigger its nuclear translocation by CBP-dependent acetylation. In the nucleus, deubiquitinates and stabilizes the nuclear receptor PPARD regulating the expression of various genes involved in glucose and lipid metabolism and oxidative phosphorylation. Also acts as a negative regulator of the ribosome quality control (RQC) by mediating deubiquitination of 40S ribosomal proteins RPS10/eS10 and RPS20/uS10, thereby antagonizing ZNF598-mediated 40S ubiquitination. In Mus musculus (Mouse), this protein is OTU domain-containing protein 3 (Otud3).